The chain runs to 287 residues: Movement protein BC1 (287 aa).

This sequence belongs to the begomovirus movement protein BC1 family. As to quaternary structure, binds to dimeric supercoiled plasmid DNA. Phosphorylated.

Its subcellular location is the host cell membrane. The protein localises to the host microsome membrane. The protein resides in the host endoplasmic reticulum membrane. Functionally, transports viral genome to neighboring plant cells directly through plasmosdesmata, without any budding. The movement protein allows efficient cell to cell propagation, by bypassing the host cell wall barrier. Begomovirus genome is shuttled out of nucleus by Nuclear shuttle protein (NSP) and the movement protein transports the DNA-NSP complex to cell plasmodesmata and facilitates further movement across the cell wall. The chain is Movement protein BC1 from Manihot esculenta (Cassava).